Consider the following 130-residue polypeptide: Large ribosomal subunit protein bL21 (130 aa).

Residues 103 to 130 (AGGKTSKAEPRKTRKAEPAAESAPAAAE) form a disordered region. Residues 108–120 (SKAEPRKTRKAEP) show a composition bias toward basic and acidic residues. Low complexity predominate over residues 121–130 (AAESAPAAAE).

Belongs to the bacterial ribosomal protein bL21 family. Part of the 50S ribosomal subunit. Contacts protein L20.

Functionally, this protein binds to 23S rRNA in the presence of protein L20. The polypeptide is Large ribosomal subunit protein bL21 (Methylorubrum extorquens (strain CM4 / NCIMB 13688) (Methylobacterium extorquens)).